Reading from the N-terminus, the 101-residue chain is ATP-dependent Clp protease adapter protein ClpS (101 aa).

The segment at 1 to 24 (MVVASAPAKPGSVGQQESASRDAT) is disordered. The span at 13–23 (VGQQESASRDA) shows a compositional bias: polar residues.

The protein belongs to the ClpS family. Binds to the N-terminal domain of the chaperone ClpA.

In terms of biological role, involved in the modulation of the specificity of the ClpAP-mediated ATP-dependent protein degradation. This Mycobacterium marinum (strain ATCC BAA-535 / M) protein is ATP-dependent Clp protease adapter protein ClpS.